A 474-amino-acid chain; its full sequence is Pyruvate kinase (474 aa).

Arg-33 is a binding site for substrate. 3 residues coordinate K(+): Asn-35, Ser-37, and Asp-67. 35-38 (NFSH) serves as a coordination point for ATP. ATP contacts are provided by Arg-74 and Lys-155. Glu-220 lines the Mg(2+) pocket. Substrate is bound by residues Gly-243, Asp-244, and Thr-276. Asp-244 is a Mg(2+) binding site.

The protein belongs to the pyruvate kinase family. In terms of assembly, homotetramer. Mg(2+) is required as a cofactor. The cofactor is K(+).

It catalyses the reaction pyruvate + ATP = phosphoenolpyruvate + ADP + H(+). Its pathway is carbohydrate degradation; glycolysis; pyruvate from D-glyceraldehyde 3-phosphate: step 5/5. In Corynebacterium efficiens (strain DSM 44549 / YS-314 / AJ 12310 / JCM 11189 / NBRC 100395), this protein is Pyruvate kinase (pyk).